The following is a 341-amino-acid chain: tRNA N6-adenosine threonylcarbamoyltransferase (341 aa).

Positions 120 and 124 each coordinate Fe cation. Substrate contacts are provided by residues V142 to G146, D175, G188, D192, and N281. Residue D310 coordinates Fe cation.

The protein belongs to the KAE1 / TsaD family. Requires Fe(2+) as cofactor.

The protein localises to the cytoplasm. It carries out the reaction L-threonylcarbamoyladenylate + adenosine(37) in tRNA = N(6)-L-threonylcarbamoyladenosine(37) in tRNA + AMP + H(+). Functionally, required for the formation of a threonylcarbamoyl group on adenosine at position 37 (t(6)A37) in tRNAs that read codons beginning with adenine. Is involved in the transfer of the threonylcarbamoyl moiety of threonylcarbamoyl-AMP (TC-AMP) to the N6 group of A37, together with TsaE and TsaB. TsaD likely plays a direct catalytic role in this reaction. In Anoxybacillus flavithermus (strain DSM 21510 / WK1), this protein is tRNA N6-adenosine threonylcarbamoyltransferase.